Here is a 678-residue protein sequence, read N- to C-terminus: Methionine--tRNA ligase (678 aa).

The 'HIGH' region motif lies at 12 to 22; that stretch reads PYANGPIHLGH. C143, C146, C156, and C159 together coordinate Zn(2+). Positions 328 to 332 match the 'KMSKS' region motif; that stretch reads KMSKS. Residue K331 participates in ATP binding. The tRNA-binding domain occupies 577–678; sequence DFSKVDLRIA…SGAQPGMRVK (102 aa).

This sequence belongs to the class-I aminoacyl-tRNA synthetase family. MetG type 1 subfamily. As to quaternary structure, homodimer. Requires Zn(2+) as cofactor.

Its subcellular location is the cytoplasm. The enzyme catalyses tRNA(Met) + L-methionine + ATP = L-methionyl-tRNA(Met) + AMP + diphosphate. Functionally, is required not only for elongation of protein synthesis but also for the initiation of all mRNA translation through initiator tRNA(fMet) aminoacylation. This chain is Methionine--tRNA ligase, found in Acidithiobacillus ferrooxidans (strain ATCC 23270 / DSM 14882 / CIP 104768 / NCIMB 8455) (Ferrobacillus ferrooxidans (strain ATCC 23270)).